A 626-amino-acid polypeptide reads, in one-letter code: Deoxynucleoside triphosphate triphosphohydrolase SAMHD1 (626 aa).

Position 1 is an N-acetylmethionine (Met-1). Residues 1 to 19 show a composition bias toward basic and acidic residues; it reads MQRADSEQPSKRPRCDDSP. Residues 1–36 are disordered; sequence MQRADSEQPSKRPRCDDSPRTPSNTPSAEADWSPGL. Ser-18 carries the phosphoserine modification. Residues Thr-21 and Thr-25 each carry the phosphothreonine modification. Phosphoserine occurs at positions 33 and 93. One can recognise an SAM domain in the interval 45-110; sequence WGPEQVCSFL…LSYIQRLVQI (66 aa). Residues Lys-116 and Val-117 each coordinate GTP. Asn-119 serves as a coordination point for dATP. Asn-119 contributes to the dCTP binding site. A dGTP-binding site is contributed by Asn-119. Asn-119 serves as a coordination point for dTTP. GTP contacts are provided by Asp-137, Gln-142, and Arg-145. Residue Gln-149 participates in dATP binding. Gln-149 contacts dCTP. Gln-149, Leu-150, Val-156, and Arg-164 together coordinate dGTP. A dTTP-binding site is contributed by Gln-149. 2 residues coordinate dATP: Val-156 and Arg-164. Residues Val-156 and Arg-164 each coordinate dCTP. Residues Val-156 and Arg-164 each contribute to the dTTP site. The HD domain maps to 164-316; the sequence is RFEHSLGVGY…GIDVDKWDYF (153 aa). Residues His-167, His-206, and Asp-207 each coordinate Mn(2+). Residues His-210 and His-215 each contribute to the dATP site. His-210 and His-215 together coordinate dCTP. Residues His-210 and His-215 each coordinate dTTP. His-233 is an active-site residue. Asp-311 provides a ligand contact to Mn(2+). DATP contacts are provided by Lys-312, Tyr-315, Asp-319, Arg-333, Arg-352, Lys-354, Asn-358, and Arg-366. DCTP-binding residues include Lys-312, Tyr-315, Asp-319, Arg-333, Arg-352, and Lys-354. The dGTP site is built by Lys-312, Tyr-315, Asp-319, Arg-333, Arg-352, Lys-354, Asn-358, and Arg-366. DTTP-binding residues include Lys-312, Tyr-315, Asp-319, Arg-333, Arg-352, and Lys-354. 2 residues coordinate dCTP: Arg-366 and Arg-372. Tyr-374, Gln-375, His-376, and Lys-377 together coordinate dGTP. DATP-binding residues include Gln-375, His-376, and Lys-377. DCTP is bound by residues Gln-375, His-376, and Lys-377. 3 residues coordinate dTTP: Gln-375, His-376, and Lys-377. Residues Arg-451 and Lys-455 each coordinate GTP. Residues Lys-467, Lys-469, and Lys-492 each participate in a glycyl lysine isopeptide (Lys-Gly) (interchain with G-Cter in SUMO2) cross-link. Position 523 (Lys-523) interacts with GTP. Lys-523 contributes to the dATP binding site. Lys-523 lines the dCTP pocket. Lys-523 is a dGTP binding site. Lys-523 serves as a coordination point for dTTP. Residue Thr-592 is modified to (Microbial infection) Phosphothreonine. Residue Thr-592 is modified to Phosphothreonine; by CDK1. Residue Lys-622 forms a Glycyl lysine isopeptide (Lys-Gly) (interchain with G-Cter in SUMO2) linkage.

Belongs to the SAMHD1 family. Homodimer; in absence of GTP and dNTP. Homotetramer; in GTP- and dNTP-bound form. Interacts with MRE11; leading to stimulate the exonuclease activity of MRE11. Interacts with RBBP8/CtIP. Interacts (via its C-terminus) with CD81. In terms of assembly, (Microbial infection) Interacts with HIV-2 viral protein Vpx; promoting interaction with a E3 ubiquitin-protein ligase complex containing DCAF1, leading to subsequent ubiquitination and degradation of SAMHD1. Mn(2+) serves as cofactor. In terms of processing, phosphorylation at Thr-592 by CDK1 acts as a switch to control deoxynucleoside triphosphate (dNTPase)-dependent and -independent functions. Phosphorylation at Thr-592 takes place in cycling cells: it reduces the stability of the homotetramer, impairing the dNTPase activity and subsequent ability to restrict infection by viruses. It also inhibits ability to suppress LINE-1 retrotransposon activity. In contrast, phosphorylation at Thr-592 promotes DNA end resection at stalled replication forks in response to DNA damage. (Microbial infection) Phosphorylation at Thr-592 by Epstein-Barr virus kinase BGLF4 and human cytomegalovirus/HCMV UL97 leads to a reduced level of dCTPase and dTTPase activity and the loss of viral restriction. Post-translationally, (Microbial infection) Ubiquitinated following interaction with HIV-2 viral protein Vpx; Vpx promotes interaction and with a DCX (DDB1-CUL4-X-box) E3 ubiquitin ligase, leading to proteasomal degradation. In terms of tissue distribution, expressed in heart, skeletal muscle, spleen, liver, small intestine, placenta, lung and peripheral blood leukocytes. No expression is seen in brain and thymus.

It is found in the nucleus. Its subcellular location is the chromosome. It catalyses the reaction a 2'-deoxyribonucleoside 5'-triphosphate + H2O = a 2'-deoxyribonucleoside + triphosphate + H(+). It carries out the reaction dATP + H2O = 2'-deoxyadenosine + triphosphate + H(+). The catalysed reaction is dCTP + H2O = 2'-deoxycytidine + triphosphate + H(+). The enzyme catalyses dGTP + H2O = 2'-deoxyguanosine + triphosphate + H(+). It catalyses the reaction dTTP + H2O = thymidine + triphosphate + H(+). With respect to regulation, allosterically activated and regulated via the combined actions of GTP and dNTPs (dATP, dGTP, dTTP and dCTP): Allosteric site 1 binds GTP, while allosteric site 2 binds dNTP. Allosteric activation promotes the formation of highly active homotetramers. Phosphorylation at Thr-592 impairs homotetramerization, thereby inhibiting dNTPase activity, leading to reduced ability to restrict infection by viruses. Protein that acts both as a host restriction factor involved in defense response to virus and as a regulator of DNA end resection at stalled replication forks. Has deoxynucleoside triphosphate (dNTPase) activity, which is required to restrict infection by viruses, such as HIV-1: dNTPase activity reduces cellular dNTP levels to levels too low for retroviral reverse transcription to occur, blocking early-stage virus replication in dendritic and other myeloid cells. Likewise, suppresses LINE-1 retrotransposon activity. Not able to restrict infection by HIV-2 virus; because restriction activity is counteracted by HIV-2 viral protein Vpx. In addition to virus restriction, dNTPase activity acts as a regulator of DNA precursor pools by regulating dNTP pools. Phosphorylation at Thr-592 acts as a switch to control dNTPase-dependent and -independent functions: it inhibits dNTPase activity and ability to restrict infection by viruses, while it promotes DNA end resection at stalled replication forks. Functions during S phase at stalled DNA replication forks to promote the resection of gapped or reversed forks: acts by stimulating the exonuclease activity of MRE11, activating the ATR-CHK1 pathway and allowing the forks to restart replication. Its ability to promote degradation of nascent DNA at stalled replication forks is required to prevent induction of type I interferons, thereby preventing chronic inflammation. Ability to promote DNA end resection at stalled replication forks is independent of dNTPase activity. Enhances immunoglobulin hypermutation in B-lymphocytes by promoting transversion mutation. The protein is Deoxynucleoside triphosphate triphosphohydrolase SAMHD1 of Homo sapiens (Human).